Here is a 356-residue protein sequence, read N- to C-terminus: MSQYWSQLVHTLTPYVPGEQPKVDNLIKLNTNESPYPPSPLVLNALSSQLNDKLRLYPDPSSEDLKQSIATYYGVESNQVFVGNGSDEVLAHAFMTLLKQDKPILFPDISYSFYPVYCGLYEIEHQTIPLTDDFKINPADYNIENGGIIFPNPNAPTGRLLPLQAIEQIVQQNASSVVVVDEAYIDFGGESAAQLVLRYPNLLVVQTFSKSRALAGLRVGFAIGDKALIDGLERVKNSFNSYPLDRLATAGAIAAIEDEPYFQQSCEKIITTRDTLTHFLEDNGFEVIPSAANFVFTRHSEMRAEDIANQLREQAIIVRYFNKPRIDQYLRITIGTEEENTQLCRALTDILKTQNA.

Position 210 is an N6-(pyridoxal phosphate)lysine (lysine 210).

This sequence belongs to the class-II pyridoxal-phosphate-dependent aminotransferase family. Histidinol-phosphate aminotransferase subfamily. As to quaternary structure, homodimer. Pyridoxal 5'-phosphate serves as cofactor.

The enzyme catalyses L-histidinol phosphate + 2-oxoglutarate = 3-(imidazol-4-yl)-2-oxopropyl phosphate + L-glutamate. It functions in the pathway amino-acid biosynthesis; L-histidine biosynthesis; L-histidine from 5-phospho-alpha-D-ribose 1-diphosphate: step 7/9. The polypeptide is Histidinol-phosphate aminotransferase 1 (Hydrogenovibrio crunogenus (strain DSM 25203 / XCL-2) (Thiomicrospira crunogena)).